The sequence spans 173 residues: Protein tyrosine phosphatase type IVA 1 (173 aa).

A Tyrosine-protein phosphatase domain is found at 8-161 (APVEVTYKNM…YRPKMRLRFK (154 aa)). A disulfide bridge links Cys-49 with Cys-104. Asp-72 acts as the Proton donor in catalysis. The tract at residues 97–132 (GCCIAVHCVAGLGRAPVLVALALIEGGMKYEDAVQF) is interaction with ATF5. Cys-104 serves as the catalytic Phosphocysteine intermediate. Phosphate is bound at residue 105–110 (VAGLGR). Arg-110 is a substrate binding site. A Cysteine methyl ester modification is found at Cys-170. Cys-170 is lipidated: S-farnesyl cysteine. A propeptide spans 171–173 (CIQ) (removed in mature form).

Belongs to the protein-tyrosine phosphatase family. In terms of assembly, homotrimer. Interacts with ATF5 and tubulin. Post-translationally, farnesylated. Farnesylation is required for membrane targeting.

The protein localises to the cell membrane. It localises to the early endosome. Its subcellular location is the endoplasmic reticulum. The protein resides in the cytoplasm. It is found in the cytoskeleton. The protein localises to the spindle. It localises to the nucleus. It carries out the reaction O-phospho-L-tyrosyl-[protein] + H2O = L-tyrosyl-[protein] + phosphate. Its activity is regulated as follows. Inhibited by sodium orthovanadate and pentamidine. In terms of biological role, protein tyrosine phosphatase which stimulates progression from G1 into S phase during mitosis. May play a role in the development and maintenance of differentiating epithelial tissues. The protein is Protein tyrosine phosphatase type IVA 1 (PTP4A1) of Pongo abelii (Sumatran orangutan).